A 277-amino-acid polypeptide reads, in one-letter code: Large ribosomal subunit protein uL2 (277 aa).

The interval 219-277 is disordered; that stretch reads TVRGSVMNPNDHPHGGGEGRAPIGRKSPMSPWGKPTLGFKTRKKKNKSDKFIVRRRKNK. Residues 258–277 show a composition bias toward basic residues; that stretch reads KTRKKKNKSDKFIVRRRKNK.

Belongs to the universal ribosomal protein uL2 family. In terms of assembly, part of the 50S ribosomal subunit. Forms a bridge to the 30S subunit in the 70S ribosome.

One of the primary rRNA binding proteins. Required for association of the 30S and 50S subunits to form the 70S ribosome, for tRNA binding and peptide bond formation. It has been suggested to have peptidyltransferase activity; this is somewhat controversial. Makes several contacts with the 16S rRNA in the 70S ribosome. The chain is Large ribosomal subunit protein uL2 from Bacillus subtilis (strain 168).